Reading from the N-terminus, the 396-residue chain is Elongation factor Tu (396 aa).

A tr-type G domain is found at 10–205; sequence KPHVNIGTIG…AVDESIPDPV (196 aa). A G1 region spans residues 19–26; sequence GHVDHGKT. GTP is bound at residue 19 to 26; it reads GHVDHGKT. Threonine 26 lines the Mg(2+) pocket. The G2 stretch occupies residues 62-66; it reads GITIN. Residues 83–86 form a G3 region; sequence DAPG. GTP contacts are provided by residues 83 to 87 and 138 to 141; these read DAPGH and NKAD. Residues 138–141 form a G4 region; it reads NKAD. A G5 region spans residues 175 to 177; it reads SAL.

The protein belongs to the TRAFAC class translation factor GTPase superfamily. Classic translation factor GTPase family. EF-Tu/EF-1A subfamily. As to quaternary structure, monomer.

It is found in the cytoplasm. The enzyme catalyses GTP + H2O = GDP + phosphate + H(+). GTP hydrolase that promotes the GTP-dependent binding of aminoacyl-tRNA to the A-site of ribosomes during protein biosynthesis. This Rhodococcus erythropolis (strain PR4 / NBRC 100887) protein is Elongation factor Tu.